The primary structure comprises 297 residues: Putative S-adenosyl-L-methionine-dependent methyltransferase MSMEG_0614/MSMEI_0598 (297 aa).

Residues Asp-125 and 154 to 155 (DL) each bind S-adenosyl-L-methionine.

The protein belongs to the UPF0677 family.

Its function is as follows. Exhibits S-adenosyl-L-methionine-dependent methyltransferase activity. The polypeptide is Putative S-adenosyl-L-methionine-dependent methyltransferase MSMEG_0614/MSMEI_0598 (Mycolicibacterium smegmatis (strain ATCC 700084 / mc(2)155) (Mycobacterium smegmatis)).